A 152-amino-acid chain; its full sequence is Superoxide dismutase [Cu-Zn] 1 (152 aa).

Cu cation is bound by residues His-45, His-47, and His-62. Cys-56 and Cys-145 are disulfide-bonded. Zn(2+)-binding residues include His-62, His-70, His-79, and Asp-82. Residue His-119 participates in Cu cation binding.

It belongs to the Cu-Zn superoxide dismutase family. In terms of assembly, homodimer. Interacts with DJ1A and CCS. Cu cation serves as cofactor. Requires Zn(2+) as cofactor. In terms of tissue distribution, expressed in leaves (at protein level). The spatial localization is regulated by miR398-mediated silencing. Mostly present in flowers, old rosette leaves and inflorescence, and, to a lower extent, in cauline leaves, stems and roots.

The protein localises to the cytoplasm. It is found in the cytosol. The protein resides in the nucleus. The catalysed reaction is 2 superoxide + 2 H(+) = H2O2 + O2. In terms of biological role, destroys radicals which are normally produced within the cells and which are toxic to biological systems. The chain is Superoxide dismutase [Cu-Zn] 1 (CSD1) from Arabidopsis thaliana (Mouse-ear cress).